The primary structure comprises 1108 residues: MFLGPWPFSRLLSWFAISSRLSGQHGLPSSKFLRCLCLLALLPLLRWGQALPYKIGVIGPWTCDPFFSKALPEVAAALAIERISRDKTFDRSYSFEYVILNEDCQTSKALASFISHQQMASGFVGPANPGFCEAASLLGTSWDKGIFSWACVNHELDNKHSFPTFSRTLPSPIRVLVTVMKYFQWAHAGVISSDEDIWMHTANRVSSALRSQGLPVGVVLTSGRDSQSIQKALQQIRQADRIRIIIMCMHSALIGGETQTHFLELAHDLKMTDGTYVFVPYDVLLYSLPYKHSPYQVLRNNPKLREAYDAVLTITVESHEKTFYEAYAEAAARGEIPEKPDSNQVSPLFGTIYNSIYFIAQAMNNAMKKNGRASAASLVQHSRNMQFYGFNQLIKTDSNGNGISEYVILDTNGKEWELRGTYTVDMETELLRFRGTPIHFPGGRPTSADAKCWFAERKICQGGIDPALAMMVCFALLIALLSINGFAYFIRRRINKIQLIKGPNRILLTLEDVTFINPHFGSKRGSRASVSFQIISEVQSGRSPRLSFSSGSLTPATYENSNIAIYEGDWVWLKKFPPGDFGDIKSIKSSASDVFEMMKDLRHENVNPLLGFFYDSGMFAIVSEFCSRRSLEDILTNDDVKLDWMFKSSLLLDLIKGMKYLHHREFIHGRLKSRNCVVDGRFVLKVTDYGFNDILEMLRLSEEEPSEEELLWTAPELLRAPGGIRLGSFAGDVYSFAIIMQEVMVRGAPFCMMDLPAKEIIDRLKMPPPVYRPVVSPEYAPAECLQLMKQCWAEASEQRPTFDEIFNQFKTFNKGKKTNIIDSMLRMLEQYSSNLEDLIRERTEELEIEKQKTEKLLTQMLPLSVAESLKKGCTVEPEGFDLVTLYFSDIVGFTTISAMSEPIEVVDLLNDLYTLFDAIIGSHDVYKVETIGDAYMVASGLPKRNGSRHAAEIANMSLDILSSVGTFKMRHMPEVPVRIRIGLHSGPVVAGVVGLTMPRYCLFGDTVNTASRMESTGLPYRIHVSLSTVTILQTLSEGYEVELRGRTELKGKGTEETFWLVGKKGFTKPLPVPPPVGKDGQVGHGLQPAEIAAFQRRKAERQLVRNKP.

The N-terminal stretch at 1-50 (MFLGPWPFSRLLSWFAISSRLSGQHGLPSSKFLRCLCLLALLPLLRWGQA) is a signal peptide. Residues 51-469 (LPYKIGVIGP…CQGGIDPALA (419 aa)) are Extracellular-facing. The cysteines at positions 104 and 132 are disulfide-linked. Residues 470–490 (MMVCFALLIALLSINGFAYFI) traverse the membrane as a helical segment. At 491–1108 (RRRINKIQLI…AERQLVRNKP (618 aa)) the chain is on the cytoplasmic side. Residues 532–812 (FQIISEVQSG…DEIFNQFKTF (281 aa)) enclose the Protein kinase domain. The 131-residue stretch at 884 to 1014 (TLYFSDIVGF…DTVNTASRME (131 aa)) folds into the Guanylate cyclase domain.

Belongs to the adenylyl cyclase class-4/guanylyl cyclase family. As to quaternary structure, homodimer. Interacts with RD3; promotes the exit of GUCY2F from the endoplasmic reticulum and its trafficking to the photoreceptor outer segments. There are 9 conserved cysteine residues in sensory guanylate cyclases, 6 in the extracellular domain, which may be involved in intra- or interchain disulfide bonds. In terms of tissue distribution, retina.

It is found in the membrane. Its subcellular location is the photoreceptor outer segment membrane. It carries out the reaction GTP = 3',5'-cyclic GMP + diphosphate. Its activity is regulated as follows. Activated by GUCA1B when free calcium ions concentration is low, and inhibited by GUCA1B when free calcium ions concentration is high. Inhibited by RD3. Its function is as follows. Responsible for the synthesis of cyclic GMP (cGMP) in rods and cones of photoreceptors. Plays an essential role in phototransduction, by mediating cGMP replenishment. May also participate in the trafficking of membrane-asociated proteins to the photoreceptor outer segment membrane. This is Retinal guanylyl cyclase 2 from Mus musculus (Mouse).